We begin with the raw amino-acid sequence, 257 residues long: Large ribosomal subunit protein uL2 (257 aa).

The disordered stretch occupies residues 207-231 (VEHPFGGGNHQHIGKPSTIRRDAPA).

The protein belongs to the universal ribosomal protein uL2 family. In terms of assembly, component of the large ribosomal subunit.

The protein localises to the cytoplasm. Component of the large ribosomal subunit. The ribosome is a large ribonucleoprotein complex responsible for the synthesis of proteins in the cell. This chain is Large ribosomal subunit protein uL2 (rpl8), found in Xenopus laevis (African clawed frog).